Here is a 55-residue protein sequence, read N- to C-terminus: MAGTANCIDILIAIILPPLGVFLKFGCGHEFWICLLLTFLGYIPGIIYAIYAITK.

The next 2 membrane-spanning stretches (helical) occupy residues Ile8–Gly28 and Phe31–Tyr51.

The protein belongs to the UPF0057 (PMP3) family.

The protein resides in the membrane. Its function is as follows. Plays a role in the regulation of membrane potential. Could mediate a proton leak. The protein is Hydrophobic protein LTI6B (LTI6B) of Oryza sativa subsp. indica (Rice).